The chain runs to 366 residues: uncharacterized protein (366 aa).

One can recognise a PINc domain in the interval Ile169 to Val280. Mg(2+) is bound at residue Asp250. The 62-residue stretch at Val295 to Phe356 folds into the TRAM domain.

The protein belongs to the ycf81 family. In the central section; belongs to the PINc/VapC protein family. It depends on Mg(2+) as a cofactor.

In terms of biological role, an RNase. This is an uncharacterized protein from Bacillus subtilis (strain 168).